A 336-amino-acid polypeptide reads, in one-letter code: Torsin-1B (336 aa).

Residues 1 to 24 form the signal peptide; the sequence is MRRIGAFGGSTALWALLAAHVAGA. N64 carries N-linked (GlcNAc...) asparagine glycosylation. Residue 109-116 participates in ATP binding; sequence GWAGTGKN. A glycan (N-linked (GlcNAc...) asparagine) is linked at N165.

Belongs to the ClpA/ClpB family. Torsin subfamily. As to quaternary structure, homohexamer. Interacts with TOR1A; the interaction may be specific of neural tissues. Interacts with TOR1AIP1; TOR1AIP1 is required for TOR1B location on the nuclear membrane. Interacts (ATP-bound) with TOR1AIP2; important for endoplasmic reticulum integrity. Post-translationally, N-glycosylated. As to expression, highly expressed in liver and muscle; lower expression levels are observed in brain (at protein level).

The protein resides in the endoplasmic reticulum lumen. The protein localises to the nucleus membrane. It carries out the reaction ATP + H2O = ADP + phosphate + H(+). May serve as a molecular chaperone assisting in the proper folding of secreted and/or membrane proteins. Plays a role in non-neural cells nuclear envelope and endoplasmic reticulum integrity. May have a redundant function with TOR1A in non-neural tissues. The protein is Torsin-1B (Tor1b) of Mus musculus (Mouse).